A 605-amino-acid polypeptide reads, in one-letter code: MNSQDLKKRQEKIRNFSIIAHIDHGKSTLADRILEKTETVSSREMQAQLLDSMDLERERGITIKLNAIELNYTAKDGETYIFHLIDTPGHVDFTYEVSRSLAACEGAILVVDAAQGIEAQTLANVYLALDNDLEILPVINKIDLPAADPERVRHEVEDVIGLDASEAVLASAKAGIGIEEILEQIVEKVPAPTGDVDAPLQALIFDSVYDAYRGVILQVRIVNGIVKPGDKIQMMSNGKTFDVTEVGIFTPKAVGRDFLATGDVGYVAASIKTVADTRVGDTVTLANNPAKEALHGYKQMNPMVFAGIYPIESNKYNDLREALEKLQLNDASLQFEPETSQALGFGFRCGFLGLLHMDVIQERLEREFNIDLIMTAPSVVYHVHTTDEDMIEVSNPSEFPDPTRVAFIEEPYVKAQIMVPQEFVGAVMELSQRKRGDFVTMDYIDDNRVNVIYQIPLAEIVFDFFDKLKSSTRGYASFDYDMSEYRRSQLVKMDILLNGDKVDALSFIVHKEFAYERGKIIVEKLKKIIPRQQFEVPIQAAIGQKIVARSDIKALRKNVLAKCYGGDVSRKRKLLEKQKAGKKRNEGYWFCRSPSRSLLECSFNG.

One can recognise a tr-type G domain in the interval 11–193 (EKIRNFSIIA…QIVEKVPAPT (183 aa)). Residues 23 to 28 (DHGKST) and 140 to 143 (NKID) contribute to the GTP site.

Belongs to the TRAFAC class translation factor GTPase superfamily. Classic translation factor GTPase family. LepA subfamily.

The protein localises to the cell membrane. The catalysed reaction is GTP + H2O = GDP + phosphate + H(+). In terms of biological role, required for accurate and efficient protein synthesis under certain stress conditions. May act as a fidelity factor of the translation reaction, by catalyzing a one-codon backward translocation of tRNAs on improperly translocated ribosomes. Back-translocation proceeds from a post-translocation (POST) complex to a pre-translocation (PRE) complex, thus giving elongation factor G a second chance to translocate the tRNAs correctly. Binds to ribosomes in a GTP-dependent manner. This chain is Elongation factor 4, found in Streptococcus pyogenes serotype M4 (strain MGAS10750).